The sequence spans 125 residues: Small ribosomal subunit protein eS8 (125 aa).

Over residues 1–11 (MAISQGKSTRL) the composition is skewed to polar residues. A disordered region spans residues 1-38 (MAISQGKSTRLPSGARNVANRGKRKAELGRDPAETRVD). The segment covering 25–38 (KAELGRDPAETRVD) has biased composition (basic and acidic residues).

It belongs to the eukaryotic ribosomal protein eS8 family. Part of the 30S ribosomal subunit.

This Methanobrevibacter smithii (strain ATCC 35061 / DSM 861 / OCM 144 / PS) protein is Small ribosomal subunit protein eS8.